The following is a 713-amino-acid chain: Elongation factor G (713 aa).

Residues 8 to 290 (ERYRNFGIMA…GVIQLLPSPV (283 aa)) enclose the tr-type G domain. GTP is bound by residues 17-24 (AHIDAGKT), 88-92 (DTPGH), and 142-145 (NKMD).

Belongs to the TRAFAC class translation factor GTPase superfamily. Classic translation factor GTPase family. EF-G/EF-2 subfamily.

Its subcellular location is the cytoplasm. Its function is as follows. Catalyzes the GTP-dependent ribosomal translocation step during translation elongation. During this step, the ribosome changes from the pre-translocational (PRE) to the post-translocational (POST) state as the newly formed A-site-bound peptidyl-tRNA and P-site-bound deacylated tRNA move to the P and E sites, respectively. Catalyzes the coordinated movement of the two tRNA molecules, the mRNA and conformational changes in the ribosome. The chain is Elongation factor G from Stenotrophomonas maltophilia (strain K279a).